A 393-amino-acid polypeptide reads, in one-letter code: Formate-dependent phosphoribosylglycinamide formyltransferase (393 aa).

N(1)-(5-phospho-beta-D-ribosyl)glycinamide is bound by residues 22–23 (EL) and E82. ATP is bound by residues R114, K155, 160-165 (SSGKGQ), 195-198 (EGLV), and E203. Residues 119-308 (RLAAETLQLP…EFALHVRAFL (190 aa)) form the ATP-grasp domain. Mg(2+)-binding residues include E267 and E279. Residues D286, K355, and 362 to 363 (RR) each bind N(1)-(5-phospho-beta-D-ribosyl)glycinamide.

The protein belongs to the PurK/PurT family. Homodimer.

It catalyses the reaction N(1)-(5-phospho-beta-D-ribosyl)glycinamide + formate + ATP = N(2)-formyl-N(1)-(5-phospho-beta-D-ribosyl)glycinamide + ADP + phosphate + H(+). The protein operates within purine metabolism; IMP biosynthesis via de novo pathway; N(2)-formyl-N(1)-(5-phospho-D-ribosyl)glycinamide from N(1)-(5-phospho-D-ribosyl)glycinamide (formate route): step 1/1. In terms of biological role, involved in the de novo purine biosynthesis. Catalyzes the transfer of formate to 5-phospho-ribosyl-glycinamide (GAR), producing 5-phospho-ribosyl-N-formylglycinamide (FGAR). Formate is provided by PurU via hydrolysis of 10-formyl-tetrahydrofolate. This chain is Formate-dependent phosphoribosylglycinamide formyltransferase, found in Yersinia pseudotuberculosis serotype IB (strain PB1/+).